Here is a 253-residue protein sequence, read N- to C-terminus: uncharacterized protein (253 aa).

NADP(+)-binding residues include Ile17, Ser36, Asp62, Asn89, Lys123, Tyr158, Lys162, Val191, and Thr193. The active-site Proton acceptor is the Tyr158. Lys162 acts as the Lowers pKa of active site Tyr in catalysis.

This sequence belongs to the short-chain dehydrogenases/reductases (SDR) family.

It localises to the cytoplasm. The protein localises to the nucleus. This is an uncharacterized protein from Schizosaccharomyces pombe (strain 972 / ATCC 24843) (Fission yeast).